Consider the following 215-residue polypeptide: Pyrrolidone-carboxylate peptidase (215 aa).

Catalysis depends on residues E78, C141, and H165.

It belongs to the peptidase C15 family. In terms of assembly, homotetramer.

The protein localises to the cytoplasm. The catalysed reaction is Release of an N-terminal pyroglutamyl group from a polypeptide, the second amino acid generally not being Pro.. Functionally, removes 5-oxoproline from various penultimate amino acid residues except L-proline. This chain is Pyrrolidone-carboxylate peptidase, found in Streptococcus pyogenes serotype M12 (strain MGAS2096).